The following is a 359-amino-acid chain: Guanine nucleotide-binding protein subunit alpha-11 (359 aa).

Residues Cys-9 and Cys-10 are each lipidated (S-palmitoyl cysteine). One can recognise a G-alpha domain in the interval 38-359 (RELKLLLLGT…QHNLKEYNLV (322 aa)). A G1 motif region spans residues 41–54 (KLLLLGTGESGKST). Residues 46-53 (GTGESGKS) and 180-183 (LRVR) contribute to the GTP site. Ser-53 serves as a coordination point for Mg(2+). The interval 178–186 (DVLRVRVPT) is G2 motif. Thr-186 serves as a coordination point for Mg(2+). The interval 201–210 (FRMVDVGGQR) is G3 motif. The segment at 270 to 277 (ILFLNKKD) is G4 motif. Residues 274 to 277 (NKKD) and Ala-331 contribute to the GTP site. Residues 329–334 (TCATDT) form a G5 motif region.

Belongs to the G-alpha family. G(q) subfamily. G proteins are composed of 3 units; alpha, beta and gamma. The alpha chain contains the guanine nucleotide binding site.

It localises to the cell membrane. It is found in the cytoplasm. It catalyses the reaction GTP + H2O = GDP + phosphate + H(+). In terms of biological role, guanine nucleotide-binding proteins (G proteins) function as transducers downstream of G protein-coupled receptors (GPCRs) in numerous signaling cascades. The alpha chain contains the guanine nucleotide binding site and alternates between an active, GTP-bound state and an inactive, GDP-bound state. Signaling by an activated GPCR promotes GDP release and GTP binding. The alpha subunit has a low GTPase activity that converts bound GTP to GDP, thereby terminating the signal. Both GDP release and GTP hydrolysis are modulated by numerous regulatory proteins. Signaling is mediated via phospholipase C-beta-dependent inositol lipid hydrolysis for signal propagation: activates phospholipase C-beta: following GPCR activation, GNA11 activates PLC-beta (PLCB1, PLCB2, PLCB3 or PLCB4), leading to production of diacylglycerol (DAG) and inositol 1,4,5-trisphosphate (IP3). This is Guanine nucleotide-binding protein subunit alpha-11 (gna11) from Xenopus laevis (African clawed frog).